The following is a 171-amino-acid chain: 3-hydroxyanthranilate 3,4-dioxygenase (171 aa).

Position 45 (R45) interacts with O2. The Fe cation site is built by H49, E55, and H93. A substrate-binding site is contributed by E55. 2 residues coordinate substrate: R97 and E107. A divalent metal cation-binding residues include C122, C125, C159, and C162.

Belongs to the 3-HAO family. Requires Fe(2+) as cofactor.

It localises to the cytoplasm. It carries out the reaction 3-hydroxyanthranilate + O2 = (2Z,4Z)-2-amino-3-carboxymuconate 6-semialdehyde. Its pathway is cofactor biosynthesis; NAD(+) biosynthesis; quinolinate from L-kynurenine: step 3/3. In terms of biological role, catalyzes the oxidative ring opening of 3-hydroxyanthranilate to 2-amino-3-carboxymuconate semialdehyde, which spontaneously cyclizes to quinolinate. In Candida albicans (strain SC5314 / ATCC MYA-2876) (Yeast), this protein is 3-hydroxyanthranilate 3,4-dioxygenase.